Here is a 250-residue protein sequence, read N- to C-terminus: Electron transport regulator A (250 aa).

Residues 164–237 form the HTH crp-type domain; that stretch reads KNAEERLAAF…GKYIIIVDHH (74 aa). Positions 197–216 form a DNA-binding region, H-T-H motif; it reads RGDIGNYLGLTVETISRLLG.

Monomer.

Regulates anaerobic growth on fumarate, nitrite, Fe(3+), TMAO, DMSO, thiosulfate and sulfite, but not on nitrate nor Mn(4+). In Shewanella oneidensis (strain ATCC 700550 / JCM 31522 / CIP 106686 / LMG 19005 / NCIMB 14063 / MR-1), this protein is Electron transport regulator A (etrA).